Reading from the N-terminus, the 819-residue chain is Meiotically up-regulated gene 45 protein (819 aa).

Residues 797–817 (AMCLLTLLIGIYLILQVVFIY) traverse the membrane as a helical segment.

It localises to the membrane. In terms of biological role, has a role in meiosis. This chain is Meiotically up-regulated gene 45 protein (mug45), found in Schizosaccharomyces pombe (strain 972 / ATCC 24843) (Fission yeast).